A 362-amino-acid chain; its full sequence is Glutaminase-asparaginase (362 aa).

An N-terminal signal peptide occupies residues 1-25 (MNAALKTFAPSALALLLILPSSASA). In terms of domain architecture, Asparaginase/glutaminase spans 35–362 (ANVVILATGG…KELQRIFWEY (328 aa)). Catalysis depends on Thr-45, which acts as the Acyl-ester intermediate. Residues Ser-92 and 125–126 (TD) each bind substrate.

The protein belongs to the asparaginase 1 family. Homotetramer.

The protein localises to the periplasm. It carries out the reaction L-glutamine + H2O = L-glutamate + NH4(+). The catalysed reaction is L-asparagine + H2O = L-aspartate + NH4(+). The polypeptide is Glutaminase-asparaginase (ansB) (Pseudomonas putida (strain ATCC 47054 / DSM 6125 / CFBP 8728 / NCIMB 11950 / KT2440)).